We begin with the raw amino-acid sequence, 355 residues long: MIKTLKRIPLVFLIAIMACSNSGDNGKDKVEEQEQAQEQGEKKGQGEERDKEDGIDGLQPTFLADQDPKPDDKKWIKVEGVSDEFNDSELDLTKWSPTPEFIWNGQDRGWYGGSRSLFEADNVSVGNGFLRIEGEKFDSPKYSPKDNTDTPPQRRYGGAYVYGKTLAEPGYYIEARMRASKTAMSAAFWLKTETKPCGENLNDGENLEIDIQECVGVFTGELGDEWTKDDWAVNANWDRIFHYNTHRHNSPCNNIGDRQTKGGKANFDKKNSDEFHIYAAYWHADGSKIDFYIDGELEKSITPVIPFKGALRLIMSSNFYDWIEETSAEDMGFNRPLEDRYTQFDWVRVWQLEDL.

Positions 1-18 (MIKTLKRIPLVFLIAIMA) are cleaved as a signal peptide. Cysteine 19 carries N-palmitoyl cysteine lipidation. Cysteine 19 carries the S-diacylglycerol cysteine lipid modification. The disordered stretch occupies residues 22–72 (SGDNGKDKVEEQEQAQEQGEKKGQGEERDKEDGIDGLQPTFLADQDPKPDD). Positions 39–54 (QGEKKGQGEERDKEDG) are enriched in basic and acidic residues. Positions 71–355 (DDKKWIKVEG…WVRVWQLEDL (285 aa)) constitute a GH16 domain. Tryptophan 110, glutamate 208, and glutamate 213 together coordinate substrate. The active-site Nucleophile is glutamate 208. Glutamate 213 functions as the Proton donor in the catalytic mechanism.

Belongs to the glycosyl hydrolase 16 family.

The protein resides in the cell outer membrane. The catalysed reaction is Hydrolysis of beta-D-galactopyranose-(1-&gt;4)-alpha-L-galactopyranose-6-sulfate linkages in porphyran.. Cleaves the sulfated polysaccharide porphyran at the (1-&gt;4) linkages between beta-D-galactopyranose and alpha-L-galactopyranose-6-sulfate, forming mostly the disaccharide alpha-L-galactopyranose-6-sulfate-(1-&gt;3)-beta-D-galactose. In Zobellia galactanivorans (strain DSM 12802 / CCUG 47099 / CIP 106680 / NCIMB 13871 / Dsij), this protein is Beta-porphyranase C (porC).